Reading from the N-terminus, the 470-residue chain is ATP synthase subunit beta (470 aa).

G155 to T162 contacts ATP.

It belongs to the ATPase alpha/beta chains family. F-type ATPases have 2 components, CF(1) - the catalytic core - and CF(0) - the membrane proton channel. CF(1) has five subunits: alpha(3), beta(3), gamma(1), delta(1), epsilon(1). CF(0) has three main subunits: a(1), b(2) and c(9-12). The alpha and beta chains form an alternating ring which encloses part of the gamma chain. CF(1) is attached to CF(0) by a central stalk formed by the gamma and epsilon chains, while a peripheral stalk is formed by the delta and b chains.

It localises to the cell membrane. The enzyme catalyses ATP + H2O + 4 H(+)(in) = ADP + phosphate + 5 H(+)(out). Its function is as follows. Produces ATP from ADP in the presence of a proton gradient across the membrane. The catalytic sites are hosted primarily by the beta subunits. The chain is ATP synthase subunit beta from Lacticaseibacillus casei (Lactobacillus casei).